We begin with the raw amino-acid sequence, 107 residues long: Period circadian protein (107 aa).

A disordered region spans residues 81 to 107 (ITNGSNTGTGTSSGSFQPPLLTEALLN). Residues 82 to 95 (TNGSNTGTGTSSGS) are compositionally biased toward low complexity.

Forms a heterodimer with timeless (TIM); the complex then translocates into the nucleus. Phosphorylated with a circadian rhythmicity, probably by the double-time protein (dbt). Phosphorylation could be implicated in the stability of per monomer and in the formation of heterodimer per-tim.

The protein localises to the nucleus. The protein resides in the cytoplasm. Its subcellular location is the perinuclear region. In terms of biological role, essential for biological clock functions. Determines the period length of circadian and ultradian rhythms; an increase in PER dosage leads to shortened circadian rhythms and a decrease leads to lengthened circadian rhythms. Essential for the circadian rhythmicity of locomotor activity, eclosion behavior, and for the rhythmic component of the male courtship song that originates in the thoracic nervous system. The biological cycle depends on the rhythmic formation and nuclear localization of the TIM-PER complex. Light induces the degradation of TIM, which promotes elimination of PER. Nuclear activity of the heterodimer coordinatively regulates PER and TIM transcription through a negative feedback loop. Behaves as a negative element in circadian transcriptional loop. Does not appear to bind DNA, suggesting indirect transcriptional inhibition. In Beris vallata (Common orange legionnaire), this protein is Period circadian protein (per).